The primary structure comprises 30 residues: Bowman-Birk type proteinase inhibitor 3 (30 aa).

2 disulfides stabilise this stretch: cysteine 9–cysteine 24 and cysteine 14–cysteine 22.

Functionally, inhibits trypsin (IC(50)=4.90 nM) and, to a lesser extent, alpha-chymotrypsin (IC(50)=1.87 uM). This chain is Bowman-Birk type proteinase inhibitor 3, found in Lathyrus sativus (White vetchling).